The following is a 124-amino-acid chain: UPF0231 protein Sbal223_3655 (124 aa).

The protein belongs to the UPF0231 family.

This Shewanella baltica (strain OS223) protein is UPF0231 protein Sbal223_3655.